The primary structure comprises 255 residues: Defective in cullin neddylation protein 1 (255 aa).

The UBA-like domain occupies 6-43 (QRELIREFLAVTSATSAAAETYLERNHWSLDHALDDFY). Residues 54-250 (QYSAELVATF…VIDEYYEWVK (197 aa)) enclose the DCUN1 domain.

In terms of biological role, may contribute to neddylation of cullin components of SCF-type E3 ubiquitin ligase complexes. Neddylation of cullins play an essential role in the regulation of SCF-type complexes activity. The chain is Defective in cullin neddylation protein 1 (DCN1) from Eremothecium gossypii (strain ATCC 10895 / CBS 109.51 / FGSC 9923 / NRRL Y-1056) (Yeast).